Reading from the N-terminus, the 396-residue chain is Small ribosomal subunit protein uS9m (396 aa).

The disordered stretch occupies residues 374–396 (PRVRERKKPGQEGARRKFTWKKR).

Belongs to the universal ribosomal protein uS9 family. In terms of assembly, component of the mitochondrial ribosome small subunit (28S) which comprises a 12S rRNA and about 30 distinct proteins.

The protein localises to the mitochondrion. This Bos taurus (Bovine) protein is Small ribosomal subunit protein uS9m (MRPS9).